Reading from the N-terminus, the 276-residue chain is MAASTLYKSCLLQPKSGSTTRRLNPSLVNPLTNPTRVSVLGKSRRDVFAKASIEMAESNSIPSVVVNSSKQHGPIIVIDNYDSFTYNLCQYMGELGCHFEVYRNDELTVEELKKKNPRGVLISPGPGTPQDSGISLQTVLELGPLVPLFGVCMGLQCIGEAFGGKIVRSPFGVMHGKSSMVHYDEKGEEGLFSGLSNPFIVGRYHSLVIEKDTFPSDELEVTAWTEDGLVMAARHRKYKHIQGVQFHPESIITTEGKTIVRNFIKIVEKKESEKLT.

The N-terminal 50 residues, 1-50, are a transit peptide targeting the chloroplast; sequence MAASTLYKSCLLQPKSGSTTRRLNPSLVNPLTNPTRVSVLGKSRRDVFAK. Positions 74–273 constitute a Glutamine amidotransferase type-1 domain; sequence PIIVIDNYDS…IKIVEKKESE (200 aa). Residue cysteine 152 is the Nucleophile of the active site. Active-site residues include histidine 247 and glutamate 249.

In terms of assembly, heterotetramer consisting of two non-identical subunits: a beta subunit and a large alpha subunit. Expressed in the central cylinder of mature primary root zones, including pericycle and early lateral root primordia, and vasculature of cotyledons.

Its subcellular location is the plastid. It is found in the chloroplast. It catalyses the reaction chorismate + L-glutamine = anthranilate + pyruvate + L-glutamate + H(+). It functions in the pathway amino-acid biosynthesis; L-tryptophan biosynthesis; L-tryptophan from chorismate: step 1/5. Its function is as follows. Part of a heterotetrameric complex that catalyzes the two-step biosynthesis of anthranilate, an intermediate in the biosynthesis of L-tryptophan. In the first step, the glutamine-binding beta subunit of anthranilate synthase (AS) provides the glutamine amidotransferase activity which generates ammonia as a substrate that, along with chorismate, is used in the second step, catalyzed by the large alpha subunit of AS to produce anthranilate. Plays an important regulatory role in auxin production via the tryptophan-dependent biosynthetic pathway. This is Anthranilate synthase beta subunit 1, chloroplastic (ASB1) from Arabidopsis thaliana (Mouse-ear cress).